Here is a 378-residue protein sequence, read N- to C-terminus: Quinolinate synthase (378 aa).

2 residues coordinate iminosuccinate: histidine 59 and serine 80. Cysteine 125 provides a ligand contact to [4Fe-4S] cluster. Residues 151 to 153 (YAN) and serine 168 contribute to the iminosuccinate site. [4Fe-4S] cluster is bound at residue cysteine 212. Iminosuccinate contacts are provided by residues 238–240 (HPE) and threonine 255. Cysteine 309 contacts [4Fe-4S] cluster.

The protein belongs to the quinolinate synthase family. Type 1 subfamily. [4Fe-4S] cluster is required as a cofactor.

The protein resides in the cytoplasm. The enzyme catalyses iminosuccinate + dihydroxyacetone phosphate = quinolinate + phosphate + 2 H2O + H(+). Its pathway is cofactor biosynthesis; NAD(+) biosynthesis; quinolinate from iminoaspartate: step 1/1. Functionally, catalyzes the condensation of iminoaspartate with dihydroxyacetone phosphate to form quinolinate. The protein is Quinolinate synthase of Burkholderia pseudomallei (strain 1106a).